Consider the following 242-residue polypeptide: MAGKLKPLNVEAPEATEEAEGQAKSLKTEDLLAMVIKLQKEGSLEPQIEDLISRINDLQQAKKKSSEELRETHSLWEALHRELDSLNGEKVHLEEVLGKKQEALRILQMHCQEKESEAQRLDVRGQLEDLMGQHKDLWEFHMLEQRLAREIRALERSKEQLLSERRLVRAKLREVERRLHSPPEVEGAMAVNDGLKAELEIFGEQVRSAPEVGAGEGEAGPELPRARDEEDPEPPVAAPDAL.

The segment at 1-24 (MAGKLKPLNVEAPEATEEAEGQAK) is disordered. Residues 44–181 (LEPQIEDLIS…LREVERRLHS (138 aa)) adopt a coiled-coil conformation. Residues 206 to 242 (VRSAPEVGAGEGEAGPELPRARDEEDPEPPVAAPDAL) are disordered.

The protein belongs to the SYCE family.

In terms of biological role, may be involved in meiosis. This chain is Synaptonemal complex central element protein 1-like (SYCE1L), found in Homo sapiens (Human).